The chain runs to 496 residues: Iroquois-class homeodomain protein irx-4 (496 aa).

A DNA-binding region (homeobox; TALE-type) is located at residues 141-203 (GSTRRKNATR…NARRRLKKEN (63 aa)). The segment at 203–236 (NKMTWPPRNKCSDEKRPYDEEEEEEEEEDSQKAT) is disordered. Positions 221–231 (DEEEEEEEEED) are enriched in acidic residues.

Belongs to the TALE/IRO homeobox family. As to expression, expressed in the neural plate in overlapping patterns with other irx members, which all share an anterior border of expression. Broadly expressed in the tailbud rhombencephalon (hindbrain). Outside the nervous system and at tailbud stages, expressed in the developing otic vesicle, branchial arches and prospective heart region.

The protein localises to the nucleus. Acts partially redundantly with other irx members in neural patterning. Required for formation of the posterior forebrain, midbrain, hindbrain, and to a lesser extent, spinal cord. Patterns the neuroectoderm in both the anterior/posterior and dorsal/ventral axes. Does not appear to play a role in pronephros kidney development. The polypeptide is Iroquois-class homeodomain protein irx-4 (Xenopus tropicalis (Western clawed frog)).